A 151-amino-acid chain; its full sequence is Caveolin-3 (151 aa).

Over 1–83 (MMAEEHTDLE…RLLSTLLGVP (83 aa)) the chain is Cytoplasmic. Lysine 38 participates in a covalent cross-link: Glycyl lysine isopeptide (Lys-Gly) (interchain with G-Cter in SUMO3). The segment at 64–114 (TFTVSKYWCYRLLSTLLGVPLALLWGFLFACISFCHIWAVVPCIKSYLIEI) is required for interaction with DAG1. Positions 84–104 (LALLWGFLFACISFCHIWAVV) form an intramembrane region, helical. At 105-151 (PCIKSYLIEIQCISHIYSLCIRTFCNPLFAALGQVCSNIKVMLRKEV) the chain is on the cytoplasmic side.

It belongs to the caveolin family. Homooligomer. Interacts with DYSF. Interacts with DLG1 and KCNA5; forms a ternary complex. Interacts with DAG1 (via its C-terminal); the interaction prevents binding of DAG1 with DMD. Interacts with TRIM72. Interacts with MUSK; may regulate MUSK signaling. Interacts with POPDC1. Interacts with CAVIN1, CAVIN2 and CAVIN4. In terms of processing, sumoylation with SUMO3 by PIAS4 may reduce agonist-induced internalization and desensitization of adrenergic receptor ABRD2.

It is found in the golgi apparatus membrane. The protein localises to the cell membrane. It localises to the membrane. Its subcellular location is the caveola. The protein resides in the sarcolemma. Functionally, may act as a scaffolding protein within caveolar membranes. Interacts directly with G-protein alpha subunits and can functionally regulate their activity. May also regulate voltage-gated potassium channels. Plays a role in the sarcolemma repair mechanism of both skeletal muscle and cardiomyocytes that permits rapid resealing of membranes disrupted by mechanical stress. Mediates the recruitment of CAVIN2 and CAVIN3 proteins to the caveolae. This Bos taurus (Bovine) protein is Caveolin-3 (CAV3).